Here is a 99-residue protein sequence, read N- to C-terminus: Large ribosomal subunit protein eL30 (99 aa).

Belongs to the eukaryotic ribosomal protein eL30 family. In terms of assembly, part of the 50S ribosomal subunit.

In Pyrococcus furiosus (strain ATCC 43587 / DSM 3638 / JCM 8422 / Vc1), this protein is Large ribosomal subunit protein eL30.